Here is a 267-residue protein sequence, read N- to C-terminus: WUSCHEL-related homeobox 8 (267 aa).

A DNA-binding region (homeobox; WUS-type) is located at residues 88-152 (TARQRWTPTP…NRRARSKRKQ (65 aa)). The disordered stretch occupies residues 148 to 195 (SKRKQAALPNNNAESEAEADEESPTDKKPKSDRPLHQNIAMRDHNSER). The segment covering 171-195 (PTDKKPKSDRPLHQNIAMRDHNSER) has biased composition (basic and acidic residues).

This sequence belongs to the WUS homeobox family.

The protein localises to the nucleus. Functionally, transcription factor which may be involved in developmental processes. The protein is WUSCHEL-related homeobox 8 (WOX8) of Oryza sativa subsp. japonica (Rice).